We begin with the raw amino-acid sequence, 342 residues long: Flotillin-like protein FloA (342 aa).

The next 2 membrane-spanning stretches (helical) occupy residues 18–38 and 39–59; these read FFIF…GKFI and SLWF…IIGM.

It belongs to the flotillin-like FloA family. Homooligomerizes.

It is found in the cell membrane. Its subcellular location is the membrane raft. In terms of biological role, found in functional membrane microdomains (FMM) that may be equivalent to eukaryotic membrane rafts. FMMs are highly dynamic and increase in number as cells age. Flotillins are thought to be important factors in membrane fluidity. The sequence is that of Flotillin-like protein FloA from Protochlamydia amoebophila (strain UWE25).